Consider the following 84-residue polypeptide: Small ribosomal subunit protein bS18B (84 aa).

Belongs to the bacterial ribosomal protein bS18 family. Part of the 30S ribosomal subunit. Forms a tight heterodimer with protein bS6.

In terms of biological role, binds as a heterodimer with protein bS6 to the central domain of the 16S rRNA, where it helps stabilize the platform of the 30S subunit. The protein is Small ribosomal subunit protein bS18B of Mycolicibacterium smegmatis (strain ATCC 700084 / mc(2)155) (Mycobacterium smegmatis).